We begin with the raw amino-acid sequence, 1893 residues long: Nestin (1893 aa).

An N-acetylmethionine modification is found at methionine 1. A head region spans residues 1–7 (MEGCVGE). Residues 8–43 (ESFQMWELNRRLEAYLTRVKTLEEQNQLLSAELGGL) are coil 1A. An IF rod domain is found at 8–314 (ESFQMWELNR…TLLEAENSRL (307 aa)). Residues 44-55 (RAQSGDTSWRAR) are linker 1. The coil 1B stretch occupies residues 56–151 (ADDELASLRI…AAHEEERAHL (96 aa)). Residues 150 to 172 (HLNAQAACAPRRPPAPPHGSPVR) form a disordered region. The segment at 152 to 174 (NAQAACAPRRPPAPPHGSPVRAP) is linker 12. The segment at 175 to 193 (EVEDLARRLGEVWRGAVRD) is coil 2A. Residues 194 to 196 (YQE) are linker 2. Residues 197-314 (RVAHMESSLG…TLLEAENSRL (118 aa)) form a coil 2B region. Serine 312 bears the Phosphoserine mark. Residues 315–1893 (QTPGRGSQAS…DGDSWSSGED (1579 aa)) are tail. Residue threonine 316 is modified to Phosphothreonine. Phosphoserine occurs at positions 356 and 359. The residue at position 389 (threonine 389) is a Phosphothreonine. Disordered regions lie at residues 437-479 (PELE…SGSR), 507-529 (NSSA…SQGP), and 556-879 (KENC…NQKS). Residues 507–517 (NSSAQKTQESG) show a composition bias toward polar residues. Serine 562 bears the Phosphoserine mark. Basic and acidic residues-rich tracts occupy residues 572–595 (GPEK…EKTL) and 606–615 (LGKEDTRTED). Position 620 is a phosphoserine (serine 620). Composition is skewed to basic and acidic residues over residues 634-646 (ESQE…KEGN) and 670-681 (MLERLVEKEDQS). Phosphoserine is present on residues serine 685 and serine 729. Basic and acidic residues-rich tracts occupy residues 717–730 (RLIE…LRSP), 761–774 (RLIE…LRSA), 802–818 (ILER…LRSP), and 846–879 (MLER…NQKS). At serine 817 the chain carries Phosphoserine. A Phosphoserine modification is found at serine 903. Basic and acidic residues-rich tracts occupy residues 949-966 (LLED…DRNG) and 989-1051 (QRIV…KSLE). The tract at residues 949-1130 (LLEDKTHKSL…ARSLGKENQE (182 aa)) is disordered. A phosphoserine mark is found at serine 1005 and serine 1049. Lysine 1136 participates in a covalent cross-link: Glycyl lysine isopeptide (Lys-Gly) (interchain with G-Cter in SUMO1); alternate. Lysine 1136 is covalently cross-linked (Glycyl lysine isopeptide (Lys-Gly) (interchain with G-Cter in SUMO2); alternate). 2 positions are modified to phosphoserine: serine 1145 and serine 1166. The tract at residues 1155–1222 (ETAEEDLERR…ELSSLGKWNV (68 aa)) is disordered. Residues 1198–1212 (DENRETLTSLEKESQ) show a composition bias toward basic and acidic residues. Serine 1216 and serine 1229 each carry phosphoserine. Positions 1237–1263 (EGLQEEQHQESLREVKQELPSSGNQQR) are disordered. Residues 1241-1253 (EEQHQESLREVKQ) are compositionally biased toward basic and acidic residues. Serine 1322 is subject to Phosphoserine. Disordered stretches follow at residues 1336–1369 (DNLE…EQDS) and 1388–1824 (EVVG…SEQV). Composition is skewed to basic and acidic residues over residues 1354 to 1363 (VTERDEDRAQ) and 1393 to 1403 (EDPRHFAREEA). Composition is skewed to acidic residues over residues 1458-1469 (ESMEGWEEEEAS) and 1561-1576 (QDWE…DDLG). Residues serine 1570, serine 1594, serine 1686, serine 1695, serine 1772, and serine 1774 each carry the phosphoserine modification. A compositionally biased stretch (acidic residues) spans 1688–1709 (GFADEEESGEEGEEEDADEEGA). Residues 1773–1788 (GSEESESASLEGEEGQ) are compositionally biased toward acidic residues. Over residues 1815–1824 (QSPNLDSEQV) the composition is skewed to polar residues. Phosphoserine occurs at positions 1866, 1889, and 1890. The tract at residues 1870–1893 (LGPSQPLKFTLSGVDGDSWSSGED) is disordered.

The protein belongs to the intermediate filament family. Forms homodimers and homotetramers in vitro. In mixtures with other intermediate filament proteins such as vimentin and alpha-internexin, this protein preferentially forms heterodimers which can assemble to form intermediate filaments if nestin does not exceed 25%. Interacts with FHOD3. Constitutively phosphorylated. This increases during mitosis when the cytoplasmic intermediate filament network is reorganized. In terms of tissue distribution, CNS stem cells.

Functionally, required for brain and eye development. Promotes the disassembly of phosphorylated vimentin intermediate filaments (IF) during mitosis and may play a role in the trafficking and distribution of IF proteins and other cellular factors to daughter cells during progenitor cell division. Required for survival, renewal and mitogen-stimulated proliferation of neural progenitor cells. This Rattus norvegicus (Rat) protein is Nestin (Nes).